The primary structure comprises 189 residues: Density-regulated protein homolog (189 aa).

Positions 105 to 172 (ICVSRAARGK…DLFDVIPEKW (68 aa)) constitute an SUI1 domain.

The protein belongs to the DENR family. In terms of assembly, interacts with MCTS1.

Functionally, regulates translation as part of a complex with MCTS1. Specifically required for translational re-initiation in mRNAs containing upstream open reading frames (uORFs). Not required for standard translational initiation. Regulates expression of a subset of gene products including mbc, InR and EcR. In Drosophila melanogaster (Fruit fly), this protein is Density-regulated protein homolog.